A 373-amino-acid chain; its full sequence is Chaperone protein DnaJ (373 aa).

Residues 5 to 70 form the J domain; sequence DFYATLGVAR…EKRAMYDQYG (66 aa). The segment at 134-212 adopts a CR-type zinc-finger fold; that stretch reads GVKKRINIPT…CRGVGRNKAV (79 aa). Residues cysteine 147, cysteine 150, cysteine 164, cysteine 167, cysteine 186, cysteine 189, cysteine 200, and cysteine 203 each coordinate Zn(2+). CXXCXGXG motif repeat units follow at residues 147–154, 164–171, 186–193, and 200–207; these read CDVCNGSG, CPTCKGSG, CPTCRGAG, and CVKCRGVG.

Belongs to the DnaJ family. In terms of assembly, homodimer. The cofactor is Zn(2+).

It is found in the cytoplasm. Functionally, participates actively in the response to hyperosmotic and heat shock by preventing the aggregation of stress-denatured proteins and by disaggregating proteins, also in an autonomous, DnaK-independent fashion. Unfolded proteins bind initially to DnaJ; upon interaction with the DnaJ-bound protein, DnaK hydrolyzes its bound ATP, resulting in the formation of a stable complex. GrpE releases ADP from DnaK; ATP binding to DnaK triggers the release of the substrate protein, thus completing the reaction cycle. Several rounds of ATP-dependent interactions between DnaJ, DnaK and GrpE are required for fully efficient folding. Also involved, together with DnaK and GrpE, in the DNA replication of plasmids through activation of initiation proteins. This chain is Chaperone protein DnaJ, found in Neisseria gonorrhoeae (strain ATCC 700825 / FA 1090).